Here is a 328-residue protein sequence, read N- to C-terminus: 2-hydroxyisoflavanone dehydratase (328 aa).

The short motif at 85–87 is the Involved in the stabilization of the negatively charged intermediate by the formation of the oxyanion hole element; that stretch reads HGG. Residues Thr-173, Asp-272, and His-304 contribute to the active site.

The protein belongs to the 'GDXG' lipolytic enzyme family.

It catalyses the reaction (2R,3S)-2,4',7-trihydroxyisoflavanone = daidzein + H2O + H(+). The enzyme catalyses 2-hydroxy-2,3-dihydrogenistein = genistein + H2O + H(+). It carries out the reaction a carboxylic ester + H2O = an alcohol + a carboxylate + H(+). It functions in the pathway secondary metabolite biosynthesis; flavonoid biosynthesis. Its function is as follows. Dehydratase that mediates the biosynthesis of isoflavonoids. Can better use 2,7-dihydroxy-4'-methoxyisoflavanone as substrate. Has also a slight carboxylesterase activity toward p-nitrophenyl butyrate. This Glycyrrhiza echinata (Licorice) protein is 2-hydroxyisoflavanone dehydratase (HIDM).